A 72-amino-acid chain; its full sequence is Translation initiation factor IF-1 (72 aa).

An S1-like domain is found at 1–72; that stretch reads MAKEDCIEME…TKGRIKFRSK (72 aa).

This sequence belongs to the IF-1 family. In terms of assembly, component of the 30S ribosomal translation pre-initiation complex which assembles on the 30S ribosome in the order IF-2 and IF-3, IF-1 and N-formylmethionyl-tRNA(fMet); mRNA recruitment can occur at any time during PIC assembly.

Its subcellular location is the cytoplasm. One of the essential components for the initiation of protein synthesis. Stabilizes the binding of IF-2 and IF-3 on the 30S subunit to which N-formylmethionyl-tRNA(fMet) subsequently binds. Helps modulate mRNA selection, yielding the 30S pre-initiation complex (PIC). Upon addition of the 50S ribosomal subunit IF-1, IF-2 and IF-3 are released leaving the mature 70S translation initiation complex. In Francisella tularensis subsp. tularensis (strain WY96-3418), this protein is Translation initiation factor IF-1.